Here is a 115-residue protein sequence, read N- to C-terminus: Large ribosomal subunit protein bL19 (115 aa).

It belongs to the bacterial ribosomal protein bL19 family.

Functionally, this protein is located at the 30S-50S ribosomal subunit interface and may play a role in the structure and function of the aminoacyl-tRNA binding site. The sequence is that of Large ribosomal subunit protein bL19 from Latilactobacillus sakei subsp. sakei (strain 23K) (Lactobacillus sakei subsp. sakei).